The sequence spans 470 residues: Neuraminidase (470 aa).

Topologically, residues 1-6 (MNPNQK) are intravirion. Residues 7-27 (LFALSGVAIALSIFNLLIGIS) traverse the membrane as a helical segment. An involved in apical transport and lipid raft association region spans residues 11 to 33 (SGVAIALSIFNLLIGISNVVLNV). The Virion surface portion of the chain corresponds to 28 to 470 (NVVLNVSLHL…PDGAQIQYFS (443 aa)). N-linked (GlcNAc...) asparagine; by host glycans are attached at residues asparagine 32, asparagine 46, asparagine 55, asparagine 56, asparagine 66, asparagine 67, and asparagine 86. A hypervariable stalk region region spans residues 36–86 (HLKNNNDQDKNWTCTSITQNNTTLIENTYVNNTTVINKETEAAKQNYLMLN). Residues 89–470 (LCKVEGWVVV…PDGAQIQYFS (382 aa)) form a head of neuraminidase region. Intrachain disulfides connect cysteine 90–cysteine 418, cysteine 122–cysteine 127, cysteine 182–cysteine 229, cysteine 231–cysteine 236, cysteine 277–cysteine 290, cysteine 279–cysteine 288, cysteine 317–cysteine 335, and cysteine 422–cysteine 449. Arginine 116 provides a ligand contact to substrate. Asparagine 144 carries N-linked (GlcNAc...) asparagine; by host glycosylation. The active-site Proton donor/acceptor is the aspartate 149. Arginine 150 contacts substrate. 2 N-linked (GlcNAc...) asparagine; by host glycosylation sites follow: asparagine 199 and asparagine 233. 275–276 (EE) serves as a coordination point for substrate. Arginine 291 is a binding site for substrate. Residues aspartate 292, glycine 296, and aspartate 323 each contribute to the Ca(2+) site. Arginine 370 lines the substrate pocket. N-linked (GlcNAc...) asparagine; by host glycosylation occurs at asparagine 400. Tyrosine 404 functions as the Nucleophile in the catalytic mechanism.

It belongs to the glycosyl hydrolase 34 family. As to quaternary structure, homotetramer. It depends on Ca(2+) as a cofactor. Post-translationally, N-glycosylated.

The protein resides in the virion membrane. It is found in the host apical cell membrane. The catalysed reaction is Hydrolysis of alpha-(2-&gt;3)-, alpha-(2-&gt;6)-, alpha-(2-&gt;8)- glycosidic linkages of terminal sialic acid residues in oligosaccharides, glycoproteins, glycolipids, colominic acid and synthetic substrates.. Its activity is regulated as follows. Inhibited by the neuraminidase inhibitors zanamivir (Relenza) and oseltamivir (Tamiflu). These drugs interfere with the release of progeny virus from infected cells and are effective against all influenza strains. Resistance to neuraminidase inhibitors is quite rare. Its function is as follows. Catalyzes the removal of terminal sialic acid residues from viral and cellular glycoconjugates. Cleaves off the terminal sialic acids on the glycosylated HA during virus budding to facilitate virus release. Additionally helps virus spread through the circulation by further removing sialic acids from the cell surface. These cleavages prevent self-aggregation and ensure the efficient spread of the progeny virus from cell to cell. Otherwise, infection would be limited to one round of replication. Described as a receptor-destroying enzyme because it cleaves a terminal sialic acid from the cellular receptors. May facilitate viral invasion of the upper airways by cleaving the sialic acid moieties on the mucin of the airway epithelial cells. Likely to plays a role in the budding process through its association with lipid rafts during intracellular transport. May additionally display a raft-association independent effect on budding. Plays a role in the determination of host range restriction on replication and virulence. Sialidase activity in late endosome/lysosome traffic seems to enhance virus replication. The polypeptide is Neuraminidase (Aves (Horse)).